The following is a 275-amino-acid chain: Ribosomal RNA small subunit methyltransferase A (275 aa).

6 residues coordinate S-adenosyl-L-methionine: Asn19, Leu21, Gly46, Glu71, Asp94, and Asn117.

It belongs to the class I-like SAM-binding methyltransferase superfamily. rRNA adenine N(6)-methyltransferase family. RsmA subfamily.

It localises to the cytoplasm. The enzyme catalyses adenosine(1518)/adenosine(1519) in 16S rRNA + 4 S-adenosyl-L-methionine = N(6)-dimethyladenosine(1518)/N(6)-dimethyladenosine(1519) in 16S rRNA + 4 S-adenosyl-L-homocysteine + 4 H(+). In terms of biological role, specifically dimethylates two adjacent adenosines (A1518 and A1519) in the loop of a conserved hairpin near the 3'-end of 16S rRNA in the 30S particle. May play a critical role in biogenesis of 30S subunits. This Burkholderia thailandensis (strain ATCC 700388 / DSM 13276 / CCUG 48851 / CIP 106301 / E264) protein is Ribosomal RNA small subunit methyltransferase A.